We begin with the raw amino-acid sequence, 409 residues long: Putative competence-damage inducible protein (409 aa).

Belongs to the CinA family.

In Clostridium botulinum (strain 657 / Type Ba4), this protein is Putative competence-damage inducible protein.